The sequence spans 324 residues: Malate dehydrogenase (324 aa).

Residues 7–13 and D34 each bind NAD(+); that span reads GAAGGIG. R88 and R94 together coordinate substrate. NAD(+) is bound by residues N101 and 124 to 126; that span reads VTN. Substrate is bound by residues N126 and R160. The Proton acceptor role is filled by H184. M238 contacts NAD(+).

The protein belongs to the LDH/MDH superfamily. MDH type 1 family. As to quaternary structure, homodimer.

The enzyme catalyses (S)-malate + NAD(+) = oxaloacetate + NADH + H(+). Catalyzes the reversible oxidation of malate to oxaloacetate. The protein is Malate dehydrogenase of Haemophilus ducreyi (strain 35000HP / ATCC 700724).